Consider the following 628-residue polypeptide: Propionate--CoA ligase (628 aa).

It belongs to the ATP-dependent AMP-binding enzyme family.

The enzyme catalyses propanoate + ATP + CoA = propanoyl-CoA + AMP + diphosphate. It functions in the pathway organic acid metabolism; propanoate degradation. In terms of biological role, catalyzes the synthesis of propionyl-CoA from propionate and CoA. Also converts acetate to acetyl-CoA but with a lower specific activity. The polypeptide is Propionate--CoA ligase (prpE) (Salmonella typhimurium (strain LT2 / SGSC1412 / ATCC 700720)).